Reading from the N-terminus, the 274-residue chain is Diaminopimelate epimerase (274 aa).

Asn11, Gln44, and Asn64 together coordinate substrate. Cys73 serves as the catalytic Proton donor. Substrate is bound by residues 74-75 (GN), Asn157, Asn190, and 208-209 (ER). Cys217 acts as the Proton acceptor in catalysis. 218–219 (GS) contacts substrate.

This sequence belongs to the diaminopimelate epimerase family. In terms of assembly, homodimer.

The protein resides in the cytoplasm. The enzyme catalyses (2S,6S)-2,6-diaminopimelate = meso-2,6-diaminopimelate. The protein operates within amino-acid biosynthesis; L-lysine biosynthesis via DAP pathway; DL-2,6-diaminopimelate from LL-2,6-diaminopimelate: step 1/1. Its function is as follows. Catalyzes the stereoinversion of LL-2,6-diaminopimelate (L,L-DAP) to meso-diaminopimelate (meso-DAP), a precursor of L-lysine and an essential component of the bacterial peptidoglycan. The protein is Diaminopimelate epimerase of Salmonella agona (strain SL483).